The sequence spans 408 residues: CinA-like protein (408 aa).

It belongs to the CinA family.

The polypeptide is CinA-like protein (Anaeromyxobacter sp. (strain K)).